The sequence spans 1087 residues: Gelsolin-related protein of 125 kDa (1087 aa).

A disordered region spans residues 1–40 (MEEDNIVDSKEIENNVEDKKEETPSSSPSPSSSLQQQQEE). The span at 7 to 23 (VDSKEIENNVEDKKEET) shows a compositional bias: basic and acidic residues. Over residues 24–40 (PSSSPSPSSSLQQQQEE) the composition is skewed to low complexity. 4 Gelsolin-like repeats span residues 73 to 146 (PFHF…PTFL), 183 to 286 (FLFK…FSKW), 335 to 442 (GKLL…FGTE), and 465 to 538 (TQLF…DNFW). Positions 550–598 (INTFINENKEEKEKEEEEKEEEEEEEEEEEEEEEEEKDNNKTTTIIKHL) form a coiled coil. The interval 555 to 592 (NENKEEKEKEEEEKEEEEEEEEEEEEEEEEEKDNNKTT) is disordered. Over residues 562 to 586 (EKEEEEKEEEEEEEEEEEEEEEEEK) the composition is skewed to acidic residues. A Gelsolin-like 5 repeat occupies 614–692 (IFKADQINPF…EQYNESPLFK (79 aa)). The stretch at 710–912 (IISYKQKLAE…ETVNEENEVG (203 aa)) forms a coiled coil. Basic and acidic residues-rich tracts occupy residues 732–770 (KQQQ…KEEE), 779–808 (EEVK…KEVN), 817–840 (EEVK…KEEE), and 849–900 (EEVK…KVNE). Positions 732 to 1087 (KQQQEQEQEQ…HNRSSSLTHA (356 aa)) are disordered. A compositionally biased stretch (acidic residues) spans 901 to 910 (ENETVNEENE). Composition is skewed to polar residues over residues 925–939 (ANSS…NEGS) and 950–961 (EPITPSVVSSSG). The span at 983-1002 (QGRKGGRKSHGKNQPQHKKN) shows a compositional bias: basic residues. Residues 1018–1040 (KSLNLDIDNQSFDLNSINNNNSV) show a composition bias toward polar residues. Positions 1047–1065 (SSPLSFSSSSINSNSTHNT) are enriched in low complexity. Residues 1066 to 1080 (PSKKNKNKNKKKHNR) are compositionally biased toward basic residues.

This sequence belongs to the villin/gelsolin family. Interacts with rasD and abpC.

The protein localises to the cytoplasmic vesicle. In terms of biological role, involved in phototaxis. Required for coupling photodetection to the locomotory machinery of slugs. May be essential in the natural environment for the propagation of spores. This chain is Gelsolin-related protein of 125 kDa (gnrA), found in Dictyostelium discoideum (Social amoeba).